We begin with the raw amino-acid sequence, 164 residues long: MKSVVTTVISAADAAGRFPSTSDLESVQGSIQRAAARLEAAEKLANNIDAVAKEAYNAAIKKYPYLNNAGEANSTDTFKAKCARDIKHYLRLIQYSLVVGGTGPLDEWGIAGQREVYRSLGLPTAPYVEALSYARNRGCSPRDLSPQALTEYNALLDYAINSLS.

(2R,3E)-phycoerythrobilin contacts are provided by Cys-82 and Cys-139.

The protein belongs to the phycobiliprotein family. In terms of assembly, heterodimer of an alpha and a beta chain. Contains two covalently linked bilin chromophores.

It localises to the cellular thylakoid membrane. Its function is as follows. Light-harvesting photosynthetic bile pigment-protein from the phycobiliprotein complex. This Pseudanabaena tenuis (strain PCC 7409) protein is C-phycoerythrin alpha chain (cpeA).